The chain runs to 254 residues: MELPVNHFKRKLRAGKSQIGLWCGLPGSYAAEIVAPAGFDWVLFDTEHSPSDVLTVLPQLQAVAPYDVSPVVRPASNDPVLIKRFLDIGVQTLLVPYVQNEEEAKAAVAAIRYPPHGVRGVSALTRATRFGRVPNYARIAEQEICLLLQIETREALGRLEAIATVEGVDGVFIGPADLAASFGHPGQPGHPEVVAAIEDAIGRLKILGKPAGILTPDETFAARCISLGTSFTAVGVDIALLARGSEALAARFAT.

Catalysis depends on histidine 48, which acts as the Proton acceptor. A divalent metal cation-binding residues include glutamate 151 and aspartate 177.

This sequence belongs to the HpcH/HpaI aldolase family. The cofactor is a divalent metal cation.

It catalyses the reaction D-glyceraldehyde + pyruvate = 2-dehydro-3-deoxy-L-galactonate. Its function is as follows. Aldolase which can catalyze in vitro the aldolisation reaction between pyruvate (PA) and D-glyceraldehyde (D-GA) to form 2-dehydro-3-deoxy-L-galactonate. The polypeptide is Pyruvate aldolase (Rhizobium etli (strain ATCC 51251 / DSM 11541 / JCM 21823 / NBRC 15573 / CFN 42)).